The chain runs to 471 residues: Variant surface glycoprotein ILTAT 1.21 (471 aa).

The N-terminal stretch at 1 to 21 (MLRALLPSTTLALILAGGGHA) is a signal peptide. 2 N-linked (GlcNAc...) asparagine glycosylation sites follow: Asn-64 and Asn-405. The disordered stretch occupies residues 406-449 (ATADECPETRCEYDSEKNECRPKKGTETTATGPGERTTPADGKA). Positions 412–431 (PETRCEYDSEKNECRPKKGT) are enriched in basic and acidic residues. The N-linked (GlcNAc...) asparagine glycan is linked to Asn-450. Ser-454 is lipidated: GPI-anchor amidated serine. Residues 455-471 (DSLLIKTSPLWLAFLLF) constitute a propeptide, removed in mature form.

Its subcellular location is the cell membrane. Its function is as follows. VSG forms a coat on the surface of the parasite. The trypanosome evades the immune response of the host by expressing a series of antigenically distinct VSGs from an estimated 1000 VSG genes. This chain is Variant surface glycoprotein ILTAT 1.21, found in Trypanosoma brucei brucei.